The primary structure comprises 1501 residues: Protein SNQ2 (1501 aa).

Polar residues predominate over residues 1–17 (MSNIKSTQDSSHNAVAR). The tract at residues 1–56 (MSNIKSTQDSSHNAVARSSSASFAASEESFTGITHDKDEQSDTPADKLTKMLTGPA) is disordered. S2 bears the N-acetylserine mark. The segment covering 18 to 30 (SSSASFAASEESF) has biased composition (low complexity). Phosphoserine is present on residues S26 and S29. Over residues 34–49 (THDKDEQSDTPADKLT) the composition is skewed to basic and acidic residues. 3 positions are modified to phosphoserine: S64, S80, and S86. In terms of domain architecture, ABC transporter 1 spans 161 to 410 (FKGIKAKRHQ…FAKMGYLCPP (250 aa)). Residues N273, N334, and N518 are each glycosylated (N-linked (GlcNAc...) asparagine). 5 consecutive transmembrane segments (helical) span residues 521–541 (YTVI…SLFY), 554–574 (GGVL…NISF), 600–620 (LASF…LFFL), 628–648 (GSFF…NGLF), and 664–680 (ISGI…TYMI). An N-linked (GlcNAc...) asparagine glycan is attached at N730. The helical transmembrane segment at 771 to 789 (FGILWCFLLGYVVLKVIFT) threads the bilayer. The ABC transporter 2 domain occupies 853–1095 (FIWKDVCFTI…ILNYFERNGA (243 aa)). Residue N874 is glycosylated (N-linked (GlcNAc...) asparagine). Residue 889 to 896 (GESGAGKT) participates in ATP binding. Position 1153 is a phosphothreonine (T1153). The next 4 membrane-spanning stretches (helical) occupy residues 1190 to 1212 (IMSK…FNVG), 1216 to 1236 (VGLQ…APAM), 1277 to 1296 (HLFF…RIFF), and 1333 to 1352 (ANVI…GVTQ). N1401 carries an N-linked (GlcNAc...) asparagine glycan. Residues 1455–1475 (FGIFWIYIFFNIIAMVCVYYL) form a helical membrane-spanning segment.

Belongs to the ABC transporter superfamily. ABCG family. PDR (TC 3.A.1.205) subfamily.

The protein resides in the membrane. Its function is as follows. Could be an ATP-dependent permease. Confers hyper-resistance to the mutagens 4-nitroquinoline-N-oxide (4-NQO) and triaziquone, as well as to the chemicals sulphomethuron methyl phenanthroline when present in multiple copies. Exhibits nucleoside triphosphatase activity. The polypeptide is Protein SNQ2 (SNQ2) (Saccharomyces cerevisiae (strain ATCC 204508 / S288c) (Baker's yeast)).